The chain runs to 338 residues: Anthranilate phosphoribosyltransferase (338 aa).

Residues G78, 81–82, T86, 88–91, 106–114, and S118 each bind 5-phospho-alpha-D-ribose 1-diphosphate; these read GD, NIST, and KHGNRSVSS. G78 lines the anthranilate pocket. Residue S90 coordinates Mg(2+). Residue N109 participates in anthranilate binding. Position 164 (R164) interacts with anthranilate. Mg(2+) contacts are provided by D223 and E224.

This sequence belongs to the anthranilate phosphoribosyltransferase family. Homodimer. Mg(2+) serves as cofactor.

It catalyses the reaction N-(5-phospho-beta-D-ribosyl)anthranilate + diphosphate = 5-phospho-alpha-D-ribose 1-diphosphate + anthranilate. It participates in amino-acid biosynthesis; L-tryptophan biosynthesis; L-tryptophan from chorismate: step 2/5. Functionally, catalyzes the transfer of the phosphoribosyl group of 5-phosphorylribose-1-pyrophosphate (PRPP) to anthranilate to yield N-(5'-phosphoribosyl)-anthranilate (PRA). This chain is Anthranilate phosphoribosyltransferase, found in Bacillus subtilis (strain 168).